Reading from the N-terminus, the 206-residue chain is Small ribosomal subunit protein uS4 (206 aa).

Residues 96–156 (SRLDNVVYRM…EKSKKQLRIQ (61 aa)) enclose the S4 RNA-binding domain.

It belongs to the universal ribosomal protein uS4 family. In terms of assembly, part of the 30S ribosomal subunit. Contacts protein S5. The interaction surface between S4 and S5 is involved in control of translational fidelity.

Its function is as follows. One of the primary rRNA binding proteins, it binds directly to 16S rRNA where it nucleates assembly of the body of the 30S subunit. With S5 and S12 plays an important role in translational accuracy. The sequence is that of Small ribosomal subunit protein uS4 from Francisella philomiragia subsp. philomiragia (strain ATCC 25017 / CCUG 19701 / FSC 153 / O#319-036).